A 1199-amino-acid polypeptide reads, in one-letter code: AP-3 complex subunit delta-1 (1199 aa).

Alanine 2 carries the post-translational modification N-acetylalanine. HEAT repeat units follow at residues 34–71 (KYIS…LGYD), 142–179 (DLAR…KYPE), 180–216 (SLRP…RNPK), 218–254 (YLSL…LEPR), 257–296 (KKLI…GMPN), 298–336 (SASI…THPK), 337–373 (SVQS…KKNL), 375–409 (EIVK…QSNY), and 521–558 (VYVQ…ERLP). 2 disordered regions span residues 623 to 695 (LDAW…RYQD) and 724 to 963 (YVKL…EPIP). 3 positions are modified to phosphoserine: serine 632, serine 634, and serine 636. 2 stretches are compositionally biased toward basic and acidic residues: residues 639-651 (EKPK…EEPR) and 665-675 (LARRREARKQE). Positions 659-679 (EEDEEELARRREARKQEQANN) form a coiled coil. Position 688 is a phosphoserine (serine 688). Residues 722–750 (DQYVKLEEQRRHRQRLEKDKKRKKKEKGK) adopt a coiled-coil conformation. Residues 732 to 754 (RHRQRLEKDKKRKKKEKGKRRHS) are compositionally biased toward basic residues. Phosphoserine occurs at positions 754 and 755. Threonine 758 carries the phosphothreonine modification. Phosphoserine occurs at positions 760, 784, and 825. The segment covering 773-790 (ITEEMPENALPSDEDDKD) has biased composition (acidic residues). The span at 791–836 (PNDPYRALDIDLDKPLADSEKLPVQKHRNAEAVKSPEKEGVLGVEK) shows a compositional bias: basic and acidic residues. A compositionally biased stretch (basic residues) spans 837-846 (KSKKPKKKEK). The stretch at 843 to 863 (KKEKKTKEREREKKDKKGEDL) forms a coiled coil. Basic and acidic residues predominate over residues 847 to 862 (KTKEREREKKDKKGED). Pro residues predominate over residues 870-880 (TPPPAAAPIPA). The segment covering 894 to 916 (PKDECEVLKGEEEDHVDHDQERK) has biased composition (basic and acidic residues). A coiled-coil region spans residues 911-934 (HDQERKSSRHKKKKHRKEKEKEER). Over residues 917 to 928 (SSRHKKKKHRKE) the composition is skewed to basic residues.

Belongs to the adaptor complexes large subunit family. As to quaternary structure, adaptor protein complex 3 (AP-3) is a heterotetramer composed of two large adaptins (delta-type subunit AP3D1 and beta-type subunit AP3B1 or AP3B2), a medium adaptin (mu-type subunit AP3M1 or AP3M2) and a small adaptin (sigma-type subunit APS1 or AP3S2). AP-3 associates with the BLOC-1 complex. Interacts with SLC30A2. Interacts with CLN3 (via dileucine motif); this interaction facilitates lysosomal targeting.

It localises to the cytoplasm. The protein localises to the golgi apparatus membrane. Its function is as follows. Part of the AP-3 complex, an adaptor-related complex which is not clathrin-associated. The complex is associated with the Golgi region as well as more peripheral structures. It facilitates the budding of vesicles from the Golgi membrane and may be directly involved in trafficking to lysosomes. Involved in process of CD8+ T-cell and NK cell degranulation. In concert with the BLOC-1 complex, AP-3 is required to target cargos into vesicles assembled at cell bodies for delivery into neurites and nerve terminals. The polypeptide is AP-3 complex subunit delta-1 (Ap3d1) (Mus musculus (Mouse)).